A 235-amino-acid polypeptide reads, in one-letter code: 7-cyano-7-deazaguanine synthase (235 aa).

8 to 18 (FSGGQDSTTCL) is an ATP binding site. Zn(2+) is bound by residues Cys187, Cys196, Cys199, and Cys202.

This sequence belongs to the QueC family. It depends on Zn(2+) as a cofactor.

It catalyses the reaction 7-carboxy-7-deazaguanine + NH4(+) + ATP = 7-cyano-7-deazaguanine + ADP + phosphate + H2O + H(+). Its pathway is purine metabolism; 7-cyano-7-deazaguanine biosynthesis. Catalyzes the ATP-dependent conversion of 7-carboxy-7-deazaguanine (CDG) to 7-cyano-7-deazaguanine (preQ(0)). This chain is 7-cyano-7-deazaguanine synthase, found in Aeromonas hydrophila subsp. hydrophila (strain ATCC 7966 / DSM 30187 / BCRC 13018 / CCUG 14551 / JCM 1027 / KCTC 2358 / NCIMB 9240 / NCTC 8049).